Consider the following 203-residue polypeptide: 2-phospho-L-lactate guanylyltransferase (203 aa).

It belongs to the CofC family. Homodimer.

It catalyses the reaction (2S)-2-phospholactate + GTP + H(+) = (2S)-lactyl-2-diphospho-5'-guanosine + diphosphate. Its pathway is cofactor biosynthesis; coenzyme F420 biosynthesis. Functionally, guanylyltransferase that catalyzes the activation of (2S)-2-phospholactate (2-PL) as (2S)-lactyl-2-diphospho-5'-guanosine, via the condensation of 2-PL with GTP. It is involved in the biosynthesis of coenzyme F420, a hydride carrier cofactor. The protein is 2-phospho-L-lactate guanylyltransferase of Halomicrobium mukohataei (strain ATCC 700874 / DSM 12286 / JCM 9738 / NCIMB 13541) (Haloarcula mukohataei).